Reading from the N-terminus, the 188-residue chain is Deoxycytidylate deaminase (188 aa).

In terms of domain architecture, CMP/dCMP-type deaminase spans 1–171; sequence MKASTVLQIA…DILRNAGIEV (171 aa). Zn(2+) contacts are provided by Cys-19, Cys-49, His-94, Glu-102, and His-104. Catalysis depends on Glu-106, which acts as the Proton donor. Zn(2+) is bound by residues Cys-132 and Cys-135.

It belongs to the cytidine and deoxycytidylate deaminase family. In terms of assembly, homohexamer. Zn(2+) is required as a cofactor.

It carries out the reaction dCMP + H2O + H(+) = dUMP + NH4(+). Allosteric enzyme whose activity is greatly influenced by the end products of its metabolic pathway, dCTP and dTTP. Its function is as follows. Supplies the nucleotide substrate for thymidylate synthetase. The chain is Deoxycytidylate deaminase (CD) from Enterobacteria phage T2 (Bacteriophage T2).